Consider the following 78-residue polypeptide: Major outer membrane lipoprotein Lpp 1 (78 aa).

The first 20 residues, 1 to 20 (MNRTKLVLGAVILGSTLLAG), serve as a signal peptide directing secretion. Cys-21 carries the N-palmitoyl cysteine lipid modification. The S-diacylglycerol cysteine moiety is linked to residue Cys-21. 2 consecutive repeats follow at residues 24–34 (NAKIDQLSSDV) and 38–48 (NAKVDQLSNDV). Positions 27 to 75 (IDQLSSDVQTLNAKVDQLSNDVNAMRSDVQAAKDDAARANQRLDNQATK) form a coiled coil. The tract at residues 56 to 78 (QAAKDDAARANQRLDNQATKYRK) is disordered. Polar residues predominate over residues 68-78 (RLDNQATKYRK). Lys-78 carries the N6-murein peptidoglycan lysine modification.

This sequence belongs to the Lpp family. Homotrimer.

The protein resides in the cell outer membrane. It localises to the secreted. The protein localises to the cell wall. Functionally, a highly abundant outer membrane lipoprotein that controls the distance between the inner and outer membranes. The only protein known to be covalently linked to the peptidoglycan network (PGN). Also non-covalently binds the PGN. The link between the cell outer membrane and PGN contributes to maintenance of the structural and functional integrity of the cell envelope, and maintains the correct distance between the PGN and the outer membrane. This Salmonella paratyphi A (strain ATCC 9150 / SARB42) protein is Major outer membrane lipoprotein Lpp 1.